Here is a 533-residue protein sequence, read N- to C-terminus: Flavin-containing monooxygenase 5 (533 aa).

Arginine 5 is modified (dimethylated arginine). Residues 10–14 (GGGVS), glutamate 33, and 41–42 (LW) contribute to the FAD site. Serine 54 bears the Phosphoserine mark. At tyrosine 56 the chain carries Phosphotyrosine. The residue at position 58 (serine 58) is a Phosphoserine. FAD is bound at residue 62-63 (NT). An NADP(+)-binding site is contributed by 196-199 (SGGD). Residue serine 280 is modified to Phosphoserine. At threonine 284 the chain carries Phosphothreonine. Position 401 is a phosphoserine (serine 401). A helical membrane pass occupies residues 513–533 (TMTIGKFMLALAFFAIIIAYF).

It belongs to the FMO family. FAD is required as a cofactor. In terms of tissue distribution, expressed in fetal and adult liver.

Its subcellular location is the microsome membrane. The protein resides in the endoplasmic reticulum membrane. The enzyme catalyses N,N-dimethylaniline + NADPH + O2 + H(+) = N,N-dimethylaniline N-oxide + NADP(+) + H2O. The catalysed reaction is NADPH + O2 + H(+) = H2O2 + NADP(+). It carries out the reaction heptan-2-one + NADPH + O2 + H(+) = pentyl acetate + NADP(+) + H2O. It catalyses the reaction octan-3-one + NADPH + O2 + H(+) = pentyl propanoate + NADP(+) + H2O. The enzyme catalyses octan-3-one + NADPH + O2 + H(+) = ethyl hexanoate + NADP(+) + H2O. The catalysed reaction is hexan-3-one + NADPH + O2 + H(+) = ethyl butanoate + NADP(+) + H2O. It carries out the reaction hexan-3-one + NADPH + O2 + H(+) = propyl propanoate + NADP(+) + H2O. It catalyses the reaction heptan-4-one + NADPH + O2 + H(+) = propyl butanoate + NADP(+) + H2O. The enzyme catalyses (2E)-geranial + NADPH + O2 + H(+) = (1E)-2,6-dimethylhepta-1,5-dien-1-yl formate + NADP(+) + H2O. The catalysed reaction is sulcatone + NADPH + O2 + H(+) = 4-methylpent-3-en-1-yl acetate + NADP(+) + H2O. Acts as a Baeyer-Villiger monooxygenase on a broad range of substrates. Catalyzes the insertion of an oxygen atom into a carbon-carbon bond adjacent to a carbonyl, which converts ketones to esters. Active on diverse carbonyl compounds, whereas soft nucleophiles are mostly non- or poorly reactive. In contrast with other forms of FMO it is non- or poorly active on 'classical' substrates such as drugs, pesticides, and dietary components containing soft nucleophilic heteroatoms. Able to oxidize drug molecules bearing a carbonyl group on an aliphatic chain, such as nabumetone and pentoxifylline. Also, in the absence of substrates, shows slow but yet significant NADPH oxidase activity. Acts as a positive modulator of cholesterol biosynthesis as well as glucose homeostasis, promoting metabolic aging via pleiotropic effects. The sequence is that of Flavin-containing monooxygenase 5 from Homo sapiens (Human).